Here is a 311-residue protein sequence, read N- to C-terminus: Heme A synthase (311 aa).

Residues Met1 to Lys6 are Cytoplasmic-facing. Residues Trp7 to Thr27 traverse the membrane as a helical segment. Residues Lys28 to Arg62 lie on the Extracellular side of the membrane. Cys35 and Cys42 form a disulfide bridge. Glu58 is a catalytic residue. Residue His61 coordinates heme o. The helical transmembrane segment at Leu63–Tyr83 threads the bilayer. Over Lys84 to Thr91 the chain is Cytoplasmic. Residues Leu92–Val112 form a helical membrane-spanning segment. Topologically, residues Trp113–Ala121 are extracellular. Residues Ile122 to Phe142 traverse the membrane as a helical segment. Position 123 (His123) interacts with heme o. The Cytoplasmic portion of the chain corresponds to Glu143–Met159. The helical transmembrane segment at Lys160–Val180 threads the bilayer. Residues Arg181 to Met211 are Extracellular-facing. Cysteines 189 and 195 form a disulfide. The helical transmembrane segment at Gly212–Ile232 threads the bilayer. His213 is a binding site for heme b. Over Arg233–Trp243 the chain is Cytoplasmic. Residues Gly244–Phe264 form a helical membrane-spanning segment. Over Thr265–Met271 the chain is Extracellular. The chain crosses the membrane as a helical span at residues Ala272–Leu292. His275 serves as a coordination point for heme b. Residues Gly293–Lys311 lie on the Cytoplasmic side of the membrane.

The protein belongs to the COX15/CtaA family. Type 1 subfamily. As to quaternary structure, interacts with CtaB. The cofactor is heme b.

The protein localises to the cell membrane. The catalysed reaction is Fe(II)-heme o + 2 A + H2O = Fe(II)-heme a + 2 AH2. Its pathway is porphyrin-containing compound metabolism; heme A biosynthesis; heme A from heme O: step 1/1. Functionally, catalyzes the conversion of heme O to heme A by two successive hydroxylations of the methyl group at C8. The first hydroxylation forms heme I, the second hydroxylation results in an unstable dihydroxymethyl group, which spontaneously dehydrates, resulting in the formyl group of heme A. The chain is Heme A synthase from Bacillus cereus (strain ATCC 10987 / NRS 248).